The primary structure comprises 223 residues: Deoxyribose-phosphate aldolase (223 aa).

The Proton donor/acceptor role is filled by D92. Catalysis depends on K154, which acts as the Schiff-base intermediate with acetaldehyde. Residue K182 is the Proton donor/acceptor of the active site.

Belongs to the DeoC/FbaB aldolase family. DeoC type 1 subfamily.

It localises to the cytoplasm. The enzyme catalyses 2-deoxy-D-ribose 5-phosphate = D-glyceraldehyde 3-phosphate + acetaldehyde. It participates in carbohydrate degradation; 2-deoxy-D-ribose 1-phosphate degradation; D-glyceraldehyde 3-phosphate and acetaldehyde from 2-deoxy-alpha-D-ribose 1-phosphate: step 2/2. In terms of biological role, catalyzes a reversible aldol reaction between acetaldehyde and D-glyceraldehyde 3-phosphate to generate 2-deoxy-D-ribose 5-phosphate. The chain is Deoxyribose-phosphate aldolase from Haemophilus influenzae (strain PittEE).